Here is a 335-residue protein sequence, read N- to C-terminus: RNA 3'-terminal phosphate cyclase (335 aa).

Residues Gln-101 and 282-285 (HMGD) contribute to the ATP site. Residue His-306 is the Tele-AMP-histidine intermediate of the active site.

This sequence belongs to the RNA 3'-terminal cyclase family. Type 1 subfamily.

The protein localises to the cytoplasm. The catalysed reaction is a 3'-end 3'-phospho-ribonucleotide-RNA + ATP = a 3'-end 2',3'-cyclophospho-ribonucleotide-RNA + AMP + diphosphate. In terms of biological role, catalyzes the conversion of 3'-phosphate to a 2',3'-cyclic phosphodiester at the end of RNA. The mechanism of action of the enzyme occurs in 3 steps: (A) adenylation of the enzyme by ATP; (B) transfer of adenylate to an RNA-N3'P to produce RNA-N3'PP5'A; (C) and attack of the adjacent 2'-hydroxyl on the 3'-phosphorus in the diester linkage to produce the cyclic end product. The biological role of this enzyme is unknown but it is likely to function in some aspects of cellular RNA processing. In Sulfolobus acidocaldarius (strain ATCC 33909 / DSM 639 / JCM 8929 / NBRC 15157 / NCIMB 11770), this protein is RNA 3'-terminal phosphate cyclase.